Here is a 426-residue protein sequence, read N- to C-terminus: Citrate synthase (426 aa).

Catalysis depends on residues His-314 and Asp-372.

Belongs to the citrate synthase family.

The enzyme catalyses oxaloacetate + acetyl-CoA + H2O = citrate + CoA + H(+). It participates in carbohydrate metabolism; tricarboxylic acid cycle; isocitrate from oxaloacetate: step 1/2. This chain is Citrate synthase (gltA), found in Helicobacter pylori (strain J99 / ATCC 700824) (Campylobacter pylori J99).